Reading from the N-terminus, the 1155-residue chain is ATP-dependent helicase/deoxyribonuclease subunit B (1155 aa).

One can recognise a UvrD-like helicase ATP-binding domain in the interval 1-300 (MSLRFIVGRA…AHLEKYYFRH (300 aa)). Position 8 to 15 (8 to 15 (GRAGSGKS)) interacts with ATP. Residues 280–590 (TPVRFQKDSA…VVGTLERSRN (311 aa)) enclose the UvrD-like helicase C-terminal domain. 4 residues coordinate [4Fe-4S] cluster: cysteine 792, cysteine 1111, cysteine 1114, and cysteine 1120.

The protein belongs to the helicase family. AddB/RexB type 1 subfamily. In terms of assembly, heterodimer of AddA and AddB. The cofactor is Mg(2+). Requires [4Fe-4S] cluster as cofactor.

In terms of biological role, the heterodimer acts as both an ATP-dependent DNA helicase and an ATP-dependent, dual-direction single-stranded exonuclease. Recognizes the chi site generating a DNA molecule suitable for the initiation of homologous recombination. The AddB subunit has 5' -&gt; 3' nuclease activity but not helicase activity. In Desulforamulus reducens (strain ATCC BAA-1160 / DSM 100696 / MI-1) (Desulfotomaculum reducens), this protein is ATP-dependent helicase/deoxyribonuclease subunit B.